The chain runs to 299 residues: Tetrahydromethanopterin S-methyltransferase subunit E (299 aa).

A run of 6 helical transmembrane segments spans residues 57–77 (AISG…TIAW), 80–100 (INAG…AAIV), 133–153 (IGPI…AAYL), 158–178 (LGNP…VGAI), 226–246 (YFCS…IIFL), and 262–282 (VTKT…AAVI).

It belongs to the MtrE family. In terms of assembly, the complex is composed of 8 subunits; MtrA, MtrB, MtrC, MtrD, MtrE, MtrF, MtrG and MtrH.

The protein resides in the cell membrane. It catalyses the reaction 5-methyl-5,6,7,8-tetrahydromethanopterin + coenzyme M + 2 Na(+)(in) = 5,6,7,8-tetrahydromethanopterin + methyl-coenzyme M + 2 Na(+)(out). It participates in one-carbon metabolism; methanogenesis from CO(2); methyl-coenzyme M from 5,10-methylene-5,6,7,8-tetrahydromethanopterin: step 2/2. Its function is as follows. Part of a complex that catalyzes the formation of methyl-coenzyme M and tetrahydromethanopterin from coenzyme M and methyl-tetrahydromethanopterin. This is an energy-conserving, sodium-ion translocating step. This chain is Tetrahydromethanopterin S-methyltransferase subunit E, found in Methanococcus maripaludis (strain C7 / ATCC BAA-1331).